Here is a 235-residue protein sequence, read N- to C-terminus: Proteasome subunit alpha (235 aa).

This sequence belongs to the peptidase T1A family. In terms of assembly, the 20S proteasome core is composed of 14 alpha and 14 beta subunits that assemble into four stacked heptameric rings, resulting in a barrel-shaped structure. The two inner rings, each composed of seven catalytic beta subunits, are sandwiched by two outer rings, each composed of seven alpha subunits. The catalytic chamber with the active sites is on the inside of the barrel. Has a gated structure, the ends of the cylinder being occluded by the N-termini of the alpha-subunits. Is capped by the proteasome-associated ATPase, ARC.

Its subcellular location is the cytoplasm. It participates in protein degradation; proteasomal Pup-dependent pathway. With respect to regulation, the formation of the proteasomal ATPase ARC-20S proteasome complex, likely via the docking of the C-termini of ARC into the intersubunit pockets in the alpha-rings, may trigger opening of the gate for substrate entry. Interconversion between the open-gate and close-gate conformations leads to a dynamic regulation of the 20S proteasome proteolysis activity. In terms of biological role, component of the proteasome core, a large protease complex with broad specificity involved in protein degradation. This Paenarthrobacter aurescens (strain TC1) protein is Proteasome subunit alpha.